A 303-amino-acid polypeptide reads, in one-letter code: Probable 5-dehydro-4-deoxyglucarate dehydratase (303 aa).

This sequence belongs to the DapA family.

It carries out the reaction 5-dehydro-4-deoxy-D-glucarate + H(+) = 2,5-dioxopentanoate + CO2 + H2O. Its pathway is carbohydrate acid metabolism; D-glucarate degradation; 2,5-dioxopentanoate from D-glucarate: step 2/2. This Acinetobacter baumannii (strain AB307-0294) protein is Probable 5-dehydro-4-deoxyglucarate dehydratase.